Consider the following 181-residue polypeptide: NADH-quinone oxidoreductase subunit I (181 aa).

2 4Fe-4S ferredoxin-type domains span residues 52–81 and 91–120; these read TRDS…LKKS and EFFR…LISD. Residues cysteine 61, cysteine 64, cysteine 67, cysteine 71, cysteine 100, cysteine 103, cysteine 106, and cysteine 110 each coordinate [4Fe-4S] cluster.

This sequence belongs to the complex I 23 kDa subunit family. NDH-1 is composed of 13 different subunits. Subunits NuoA, H, J, K, L, M, N constitute the membrane sector of the complex. Requires [4Fe-4S] cluster as cofactor.

The protein localises to the cell inner membrane. It carries out the reaction a quinone + NADH + 5 H(+)(in) = a quinol + NAD(+) + 4 H(+)(out). Its function is as follows. NDH-1 shuttles electrons from NADH, via FMN and iron-sulfur (Fe-S) centers, to quinones in the respiratory chain. The immediate electron acceptor for the enzyme in this species is believed to be ubiquinone. Couples the redox reaction to proton translocation (for every two electrons transferred, four hydrogen ions are translocated across the cytoplasmic membrane), and thus conserves the redox energy in a proton gradient. The chain is NADH-quinone oxidoreductase subunit I from Blochmanniella floridana.